A 92-amino-acid chain; its full sequence is Putative regulatory protein CTN_0877 (92 aa).

It belongs to the RemA family.

This Thermotoga neapolitana (strain ATCC 49049 / DSM 4359 / NBRC 107923 / NS-E) protein is Putative regulatory protein CTN_0877.